We begin with the raw amino-acid sequence, 424 residues long: O-seryl-dTMP PLP-dependent decarboxylase (424 aa).

The protein belongs to the pyridoxal-phosphate-dependent aminodecarboxylase family.

The catalysed reaction is 5-O-(L-seryl)-dTMP in DNA + H(+) = 5-aminoethoxy-methyl-dUMP in DNA + CO2. Functionally, converts 5-O-serinylthymidine (O-SerT) into 5-aminoethoxy-2'-deoxymethyluridine (5-NeOmdU) as a step in the pathway leading to thymidine hypermodifications in the viral genome. As a final result of the pathway of hypermodification, 5-NeOmdU substitutes for about 40% of the thymidines in the viral DNA. These modifications probably prevent degradation of viral genome by the host restriction-modification antiviral defense system. The polypeptide is O-seryl-dTMP PLP-dependent decarboxylase (Salmonella phage ViI).